Reading from the N-terminus, the 276-residue chain is Large ribosomal subunit protein uL2 (276 aa).

The tract at residues 224 to 276 (VMNPVDHPHGGGEGKAPIGRKSPMTPWGKPTLGFKTRKKKNKSDKFIIRRRKK) is disordered. The segment covering 258–276 (KTRKKKNKSDKFIIRRRKK) has biased composition (basic residues).

This sequence belongs to the universal ribosomal protein uL2 family. In terms of assembly, part of the 50S ribosomal subunit. Forms a bridge to the 30S subunit in the 70S ribosome.

Its function is as follows. One of the primary rRNA binding proteins. Required for association of the 30S and 50S subunits to form the 70S ribosome, for tRNA binding and peptide bond formation. It has been suggested to have peptidyltransferase activity; this is somewhat controversial. Makes several contacts with the 16S rRNA in the 70S ribosome. The polypeptide is Large ribosomal subunit protein uL2 (Geobacillus sp. (strain WCH70)).